Reading from the N-terminus, the 145-residue chain is UPF0179 protein TV1250 (145 aa).

It belongs to the UPF0179 family.

The chain is UPF0179 protein TV1250 from Thermoplasma volcanium (strain ATCC 51530 / DSM 4299 / JCM 9571 / NBRC 15438 / GSS1).